The primary structure comprises 225 residues: UPF0758 protein Sfri_3828 (225 aa).

One can recognise an MPN domain in the interval 102 to 224 (ILTNPDLTRD…IVSFAERGWI (123 aa)). Residues H173, H175, and D186 each coordinate Zn(2+). Residues 173-186 (HNHPSGIAEPSQAD) carry the JAMM motif motif.

Belongs to the UPF0758 family.

In Shewanella frigidimarina (strain NCIMB 400), this protein is UPF0758 protein Sfri_3828.